The sequence spans 647 residues: UvrABC system protein C (647 aa).

The 80-residue stretch at 16–95 folds into the GIY-YIG domain; that stretch reads VEPGVYRFRD…IKEFDPRFNI (80 aa). Residues 208 to 243 enclose the UVR domain; it reads DRYARDLERKMSAAAEQLDFERAARLRDDLFALKRA.

The protein belongs to the UvrC family. As to quaternary structure, interacts with UvrB in an incision complex.

It localises to the cytoplasm. In terms of biological role, the UvrABC repair system catalyzes the recognition and processing of DNA lesions. UvrC both incises the 5' and 3' sides of the lesion. The N-terminal half is responsible for the 3' incision and the C-terminal half is responsible for the 5' incision. This chain is UvrABC system protein C, found in Mycobacterium leprae (strain Br4923).